The sequence spans 444 residues: ATP-dependent protease ATPase subunit HslU (444 aa).

ATP is bound by residues I18 and 60–65; that span reads GVGKTE. Residues 143–163 are disordered; it reads WGEVENHDSHSSTRQAFRKKL. ATP-binding residues include D257, E322, and R394.

The protein belongs to the ClpX chaperone family. HslU subfamily. In terms of assembly, a double ring-shaped homohexamer of HslV is capped on each side by a ring-shaped HslU homohexamer. The assembly of the HslU/HslV complex is dependent on binding of ATP.

The protein localises to the cytoplasm. In terms of biological role, ATPase subunit of a proteasome-like degradation complex; this subunit has chaperone activity. The binding of ATP and its subsequent hydrolysis by HslU are essential for unfolding of protein substrates subsequently hydrolyzed by HslV. HslU recognizes the N-terminal part of its protein substrates and unfolds these before they are guided to HslV for hydrolysis. The sequence is that of ATP-dependent protease ATPase subunit HslU from Haemophilus influenzae (strain 86-028NP).